The sequence spans 510 residues: uncharacterized protein (510 aa).

Over 1–89 (MTSSLDDIEP…QGQRKKVLLK (89 aa)) the chain is Lumenal. Positions 38-76 (AVSQGVPDMDGQTTDSSKDPEPNSEDKKAFPPSSGSFFS) are disordered. The span at 53–66 (SSKDPEPNSEDKKA) shows a compositional bias: basic and acidic residues. Residues 67–76 (FPPSSGSFFS) are compositionally biased toward low complexity. The chain crosses the membrane as a helical span at residues 90–110 (FVFTNCLLAIICFTMFVLFWG). The Cytoplasmic portion of the chain corresponds to 111–123 (ALYDTSKYLHKVK). The chain crosses the membrane as a helical span at residues 124–144 (LLVVIQEPPVVILDNNSSMVV). Over 145–312 (PSISYALPTF…TDRILLAPTQ (168 aa)) the chain is Lumenal. Residues 313 to 333 (IGVVYCLLLTFFQFLLYGPLH) form a helical membrane-spanning segment. Residues 334–349 (VEMAKVLRPANGLIYR) lie on the Cytoplasmic side of the membrane. Residues 350–370 (IAMSWFTFFFASLFFCTTTAI) form a helical membrane-spanning segment. Topologically, residues 371–381 (FQVDFTKSFGR) are lumenal. Residues 382-402 (GGFVVYWMSTWLFMLAAGGAN) form a helical membrane-spanning segment. At 403 to 416 (ENAVMLVITLGPQY) the chain is on the cytoplasmic side. A helical transmembrane segment spans residues 417–437 (LGFWILSFVILNIAPSFFPLA). The Lumenal segment spans residues 438–474 (LNNNVYRYGYMMPVHNVIDIYRVIFFDVTRRKMGRNY). The chain crosses the membrane as a helical span at residues 475 to 495 (GILVALIALNTALLPFVGKYA). The Cytoplasmic segment spans residues 496–510 (SRKLKQKALVAAKQS).

The protein to yeast SNG1.

It localises to the endoplasmic reticulum membrane. This is an uncharacterized protein from Saccharomyces cerevisiae (strain ATCC 204508 / S288c) (Baker's yeast).